Here is an 844-residue protein sequence, read N- to C-terminus: Patched-related protein 9 (844 aa).

One can recognise an SSD domain in the interval 264-421 (LIPWMPWTSL…VTFFNAVMSL (158 aa)).

The protein belongs to the patched family.

The chain is Patched-related protein 9 (ptr-9) from Caenorhabditis elegans.